The following is a 301-amino-acid chain: Protease HtpX (301 aa).

2 helical membrane-spanning segments follow: residues 4-24 (IGLFLLTNLAILVVLGVVLFI) and 44-64 (TGLLIIAAVIGFGGSFISLAM). Position 150 (His150) interacts with Zn(2+). Residue Glu151 is part of the active site. His154 contributes to the Zn(2+) binding site. A run of 2 helical transmembrane segments spans residues 165-185 (LIQGVVNTFVVFFSRIIGHFV) and 201-221 (FITSIFAQIVLGILASVIVMW). Glu227 is a binding site for Zn(2+).

This sequence belongs to the peptidase M48B family. The cofactor is Zn(2+).

It is found in the cell inner membrane. The protein is Protease HtpX of Alkalilimnicola ehrlichii (strain ATCC BAA-1101 / DSM 17681 / MLHE-1).